The sequence spans 122 residues: Large ribosomal subunit protein uL14 (122 aa).

This sequence belongs to the universal ribosomal protein uL14 family. As to quaternary structure, part of the 50S ribosomal subunit. Forms a cluster with proteins L3 and L19. In the 70S ribosome, L14 and L19 interact and together make contacts with the 16S rRNA in bridges B5 and B8.

Its function is as follows. Binds to 23S rRNA. Forms part of two intersubunit bridges in the 70S ribosome. In Delftia acidovorans (strain DSM 14801 / SPH-1), this protein is Large ribosomal subunit protein uL14.